Reading from the N-terminus, the 117-residue chain is Large ribosomal subunit protein uL18 (117 aa).

The protein belongs to the universal ribosomal protein uL18 family. As to quaternary structure, part of the 50S ribosomal subunit; part of the 5S rRNA/L5/L18/L25 subcomplex. Contacts the 5S and 23S rRNAs.

Functionally, this is one of the proteins that bind and probably mediate the attachment of the 5S RNA into the large ribosomal subunit, where it forms part of the central protuberance. In Phytoplasma mali (strain AT), this protein is Large ribosomal subunit protein uL18.